Reading from the N-terminus, the 358-residue chain is Alternative oxidase, mitochondrial (358 aa).

Residues 152–172 (LIRMVFLESVAGVPGMVAGML) form a helical membrane-spanning segment. Fe cation is bound by residues glutamate 159, glutamate 198, and histidine 201. The helical transmembrane segment at 217–237 (FMIIGAQGVFFNSMFLSYLIS) threads the bilayer. 4 residues coordinate Fe cation: glutamate 249, glutamate 250, glutamate 306, and histidine 309.

The protein belongs to the alternative oxidase family. The cofactor is Fe cation.

The protein localises to the mitochondrion inner membrane. In terms of biological role, catalyzes cyanide-resistant oxygen consumption. May increase respiration when the cytochrome respiratory pathway is restricted, or in response to low temperatures. The polypeptide is Alternative oxidase, mitochondrial (Blumeria graminis (Powdery mildew)).